The following is a 202-amino-acid chain: Holliday junction resolvase RecU (202 aa).

Mg(2+) is bound by residues T85, D87, E100, and Q119.

This sequence belongs to the RecU family. The cofactor is Mg(2+).

It localises to the cytoplasm. It catalyses the reaction Endonucleolytic cleavage at a junction such as a reciprocal single-stranded crossover between two homologous DNA duplexes (Holliday junction).. In terms of biological role, endonuclease that resolves Holliday junction intermediates in genetic recombination. Cleaves mobile four-strand junctions by introducing symmetrical nicks in paired strands. Promotes annealing of linear ssDNA with homologous dsDNA. Required for DNA repair, homologous recombination and chromosome segregation. This is Holliday junction resolvase RecU from Streptococcus pyogenes serotype M6 (strain ATCC BAA-946 / MGAS10394).